A 213-amino-acid polypeptide reads, in one-letter code: Probable aspartate aminotransferase (213 aa).

Positions 47, 133, and 183 each coordinate L-aspartate.

It belongs to the class-I pyridoxal-phosphate-dependent aminotransferase family. In terms of assembly, homodimer. The cofactor is pyridoxal 5'-phosphate.

The protein localises to the cytoplasm. The catalysed reaction is L-aspartate + 2-oxoglutarate = oxaloacetate + L-glutamate. This Streptomyces griseus protein is Probable aspartate aminotransferase (aspC).